We begin with the raw amino-acid sequence, 243 residues long: Ubiquinone/menaquinone biosynthesis C-methyltransferase UbiE (243 aa).

Residues Thr-69, Asp-90, and 116–117 (DA) contribute to the S-adenosyl-L-methionine site.

This sequence belongs to the class I-like SAM-binding methyltransferase superfamily. MenG/UbiE family.

It catalyses the reaction a 2-demethylmenaquinol + S-adenosyl-L-methionine = a menaquinol + S-adenosyl-L-homocysteine + H(+). It carries out the reaction a 2-methoxy-6-(all-trans-polyprenyl)benzene-1,4-diol + S-adenosyl-L-methionine = a 5-methoxy-2-methyl-3-(all-trans-polyprenyl)benzene-1,4-diol + S-adenosyl-L-homocysteine + H(+). Its pathway is quinol/quinone metabolism; menaquinone biosynthesis; menaquinol from 1,4-dihydroxy-2-naphthoate: step 2/2. The protein operates within cofactor biosynthesis; ubiquinone biosynthesis. In terms of biological role, methyltransferase required for the conversion of demethylmenaquinol (DMKH2) to menaquinol (MKH2) and the conversion of 2-polyprenyl-6-methoxy-1,4-benzoquinol (DDMQH2) to 2-polyprenyl-3-methyl-6-methoxy-1,4-benzoquinol (DMQH2). The chain is Ubiquinone/menaquinone biosynthesis C-methyltransferase UbiE from Cupriavidus metallidurans (strain ATCC 43123 / DSM 2839 / NBRC 102507 / CH34) (Ralstonia metallidurans).